A 267-amino-acid chain; its full sequence is MSLKQITISTLRQWKLANKKFACITAYDASFSRLFAEQGMPVMLVGDSLGMTAQGHSTTLPVSVEDIAYHTKSVRRGAPNRLLMADLPFMSYSTWEDACKNAATVMRAGANIVKIEGGGNWIFEIVQRLTERSVPVAGHLGLTPQSVNIFGGYKIQGREQSAAARLIENAQQLEKFGAQLLVLECIPESLAEQITKTISIPTIGIGAGKHTDGQILVMHDALGITGGRPPKFAKNFLSGAGDIRTAIQRYIYEVEQGLYPAEEHSFQ.

This sequence belongs to the PanB family.

It carries out the reaction 3-methyl-2-oxobutanoate + (6R)-5,10-methylene-5,6,7,8-tetrahydrofolate + H2O = 2-dehydropantoate + (6S)-5,6,7,8-tetrahydrofolate. It participates in cofactor biosynthesis; (R)-pantothenate biosynthesis; (R)-pantoate from 3-methyl-2-oxobutanoate: step 1/2. In Schizosaccharomyces pombe (strain 972 / ATCC 24843) (Fission yeast), this protein is Probable 3-methyl-2-oxobutanoate hydroxymethyltransferase.